A 445-amino-acid polypeptide reads, in one-letter code: E3 ubiquitin-protein ligase pellino homolog 3 (445 aa).

Residues 1–24 form a disordered region; sequence MVLEGNPDVGSPRTSDLQHPGSQG. Serine 11 carries the phosphoserine modification. The segment covering 12-24 has biased composition (polar residues); sequence PRTSDLQHPGSQG.

Belongs to the pellino family. Interacts with TRAF6, MAP3K14 and MAP3K7. Post-translationally, phosphorylated by IRAK1 enhancing its E3 ligase activity.

It catalyses the reaction S-ubiquitinyl-[E2 ubiquitin-conjugating enzyme]-L-cysteine + [acceptor protein]-L-lysine = [E2 ubiquitin-conjugating enzyme]-L-cysteine + N(6)-ubiquitinyl-[acceptor protein]-L-lysine.. The protein operates within protein modification; protein ubiquitination. E3 ubiquitin ligase catalyzing the covalent attachment of ubiquitin moieties onto substrate proteins. Involved in the TLR and IL-1 signaling pathways via interaction with the complex containing IRAK kinases and TRAF6. Mediates 'Lys-63'-linked polyubiquitination of IRAK1. Can activate AP1/JUN and ELK1. Acts as a regulator of innate immunity by mediating 'Lys-63'-linked polyubiquitination of RIPK2 downstream of NOD1 and NOD2, thereby transforming RIPK2 into a scaffolding protein for downstream effectors, ultimately leading to activation of the NF-kappa-B and MAP kinases signaling. Catalyzes 'Lys-63'-linked polyubiquitination of RIPK2 in parallel of XIAP. This is E3 ubiquitin-protein ligase pellino homolog 3 from Mus musculus (Mouse).